Reading from the N-terminus, the 281-residue chain is MEMO1 family protein APE_1771 (281 aa).

The protein belongs to the MEMO1 family.

The polypeptide is MEMO1 family protein APE_1771 (Aeropyrum pernix (strain ATCC 700893 / DSM 11879 / JCM 9820 / NBRC 100138 / K1)).